The chain runs to 603 residues: NAD 5'-nucleotidase (603 aa).

The N-terminal stretch at 1-25 is a signal peptide; sequence MLLSKKSASFALSAFAMLFTSVALA. The Zn(2+) site is built by D44, H46, D94, N126, and H227. Substrate-binding positions include R397, R437, F456, and 540–546; that span reads YVAGGKD.

This sequence belongs to the 5'-nucleotidase family. It depends on Zn(2+) as a cofactor.

The protein localises to the periplasm. It catalyses the reaction a ribonucleoside 5'-phosphate + H2O = a ribonucleoside + phosphate. Degrades NAD into adenosine and nicotinamide riboside, the latter being subsequently internalized by a specific permease. Also endowed with NAD(P) pyrophosphatase activity. Exhibits a broad substrate specificity, recognizing either mono- or dinucleotide nicotinamides and different adenosine phosphates with a maximal activity on 5'-adenosine monophosphate. This Haemophilus influenzae (strain ATCC 51907 / DSM 11121 / KW20 / Rd) protein is NAD 5'-nucleotidase.